Reading from the N-terminus, the 297-residue chain is Iron/alpha-ketoglutarate-dependent dioxygenase ausU (297 aa).

Histidine 130, aspartate 132, and histidine 206 together coordinate Fe cation.

The protein belongs to the PhyH family. Homodimer. Fe cation serves as cofactor.

It participates in secondary metabolite biosynthesis; terpenoid biosynthesis. Functionally, iron/alpha-ketoglutarate-dependent dioxygenase; part of the gene cluster that mediates the biosynthesis of calidodehydroaustin, a fungal meroterpenoid. The first step of the pathway is the synthesis of 3,5-dimethylorsellinic acid by the polyketide synthase ausA. 3,5-dimethylorsellinic acid is then prenylated by the polyprenyl transferase ausN. Further epoxidation by the FAD-dependent monooxygenase ausM and cyclization by the probable terpene cyclase ausL lead to the formation of protoaustinoid A. Protoaustinoid A is then oxidized to spiro-lactone preaustinoid A3 by the combined action of the FAD-binding monooxygenases ausB and ausC, and the dioxygenase ausE. Acid-catalyzed keto-rearrangement and ring contraction of the tetraketide portion of preaustinoid A3 by ausJ lead to the formation of preaustinoid A4. The aldo-keto reductase ausK, with the help of ausH, is involved in the next step by transforming preaustinoid A4 into isoaustinone which is in turn hydroxylated by the P450 monooxygenase ausI to form austinolide. The cytochrome P450 monooxygenase ausG modifies austinolide to austinol. Austinol is further acetylated to austin by the O-acetyltransferase ausP, which spontaneously changes to dehydroaustin. The cytochrome P450 monooxygenase ausR then converts dehydroaustin is into 7-dehydrodehydroaustin. The hydroxylation catalyzed by ausR permits the O-acetyltransferase ausQ to add an additional acetyl group to the molecule, leading to the formation of acetoxydehydroaustin. The short chain dehydrogenase ausT catalyzes the reduction of the double bond present between carbon atoms 1 and 2 to convert 7-dehydrodehydroaustin into 1,2-dihydro-7-hydroxydehydroaustin. AusQ catalyzes not only an acetylation reaction but also the addition of the PKS ausV diketide product to 1,2-dihydro-7-hydroxydehydroaustin, forming precalidodehydroaustin. Finally, the iron/alpha-ketoglutarate-dependent dioxygenase converts precalidodehydroaustin into calidodehydroaustin. This Aspergillus calidoustus protein is Iron/alpha-ketoglutarate-dependent dioxygenase ausU.